The sequence spans 710 residues: Serine/threonine-protein phosphatase PP-Z2 (710 aa).

The segment at 1–382 (MGNSGSKQHT…ADGDNGSRTN (382 aa)) is disordered. Glycine 2 carries N-myristoyl glycine lipidation. The segment covering 15–27 (KKDDHDGDRKKTL) has biased composition (basic and acidic residues). The span at 40 to 49 (SLKSSRSLRS) shows a compositional bias: low complexity. A phosphoserine mark is found at serine 55 and serine 71. Polar residues-rich tracts occupy residues 62–77 (NVQA…SSTL) and 95–104 (PNNHYLTSHP). Composition is skewed to low complexity over residues 105–125 (SSSR…NNNS) and 143–155 (NSTS…SFNS). Positions 160–172 (LTDDDDDRGDDGG) are enriched in acidic residues. Threonine 161 is subject to Phosphothreonine. A phosphoserine mark is found at serine 203 and serine 224. Positions 247 to 260 (SNRSNSHASSRKSS) are enriched in low complexity. A compositionally biased stretch (polar residues) spans 261–273 (FGSTGNTAYSTPL). Residue threonine 271 is modified to Phosphothreonine. Phosphoserine is present on serine 275. The segment covering 291–302 (DNVNGRGTSPIP) has biased composition (polar residues). Phosphoserine is present on serine 310. Mn(2+) contacts are provided by aspartate 454, histidine 456, aspartate 482, and asparagine 514. The active-site Proton donor is histidine 515. Mn(2+) is bound by residues histidine 563 and histidine 638.

Belongs to the PPP phosphatase family. PP-Z subfamily. Requires Mn(2+) as cofactor.

It catalyses the reaction O-phospho-L-seryl-[protein] + H2O = L-seryl-[protein] + phosphate. It carries out the reaction O-phospho-L-threonyl-[protein] + H2O = L-threonyl-[protein] + phosphate. Essential for the maintenance of cell size and integrity in response to osmotic stress. The polypeptide is Serine/threonine-protein phosphatase PP-Z2 (PPZ2) (Saccharomyces cerevisiae (strain ATCC 204508 / S288c) (Baker's yeast)).